We begin with the raw amino-acid sequence, 333 residues long: Phospholipid phosphatase-related protein type 1 (333 aa).

The next 3 membrane-spanning stretches (helical) occupy residues 12-32, 66-86, and 126-146; these read IIPC…LLAY, FIQP…IIFV, and FIGV…AGQV. A glycan (N-linked (GlcNAc...) asparagine) is linked at Asn-162. The next 3 membrane-spanning stretches (helical) occupy residues 200–217, 223–243, and 256–276; these read ASLS…ITST, SRLA…LTGL, and VVAG…CVVN.

This sequence belongs to the PA-phosphatase related phosphoesterase family.

It is found in the cell membrane. It localises to the cell projection. The protein resides in the neuron projection. Its function is as follows. May play a role in neurite outgrowth and neurogenesis. This is Phospholipid phosphatase-related protein type 1 (plppr1) from Danio rerio (Zebrafish).